A 448-amino-acid chain; its full sequence is tRNA modification GTPase MnmE (448 aa).

Positions 24, 81, and 120 each coordinate (6S)-5-formyl-5,6,7,8-tetrahydrofolate. The TrmE-type G domain occupies Gly216–Gly373. Residue Asn226 participates in K(+) binding. Residues Asn226 to Ser231, Thr245 to Thr251, and Asp270 to Gly273 each bind GTP. Ser230 is a binding site for Mg(2+). Residues Thr245, Ile247, and Thr250 each coordinate K(+). Thr251 contacts Mg(2+). Lys448 is a binding site for (6S)-5-formyl-5,6,7,8-tetrahydrofolate.

This sequence belongs to the TRAFAC class TrmE-Era-EngA-EngB-Septin-like GTPase superfamily. TrmE GTPase family. Homodimer. Heterotetramer of two MnmE and two MnmG subunits. K(+) is required as a cofactor.

The protein localises to the cytoplasm. Exhibits a very high intrinsic GTPase hydrolysis rate. Involved in the addition of a carboxymethylaminomethyl (cmnm) group at the wobble position (U34) of certain tRNAs, forming tRNA-cmnm(5)s(2)U34. The protein is tRNA modification GTPase MnmE of Neisseria gonorrhoeae (strain ATCC 700825 / FA 1090).